The following is an 845-amino-acid chain: Protein arginine N-methyltransferase 9 (845 aa).

TPR repeat units follow at residues 25 to 58, 67 to 100, and 101 to 134; these read VSRS…APEL, QYTL…FPDD, and EVIC…NPDF. 2 SAM-dependent MTase PRMT-type domains span residues 137–466 and 530–845; these read AKEN…YLRI and NIPY…TVKQ.

The protein belongs to the class I-like SAM-binding methyltransferase superfamily. Protein arginine N-methyltransferase family. Found in a complex with PRMT9, SF3B2 and SF3B4. Interacts with SF3B2.

The protein resides in the cytoplasm. It catalyses the reaction L-arginyl-[protein] + 2 S-adenosyl-L-methionine = N(omega),N(omega)'-dimethyl-L-arginyl-[protein] + 2 S-adenosyl-L-homocysteine + 2 H(+). Arginine methyltransferase that can both catalyze the formation of omega-N monomethylarginine (MMA) and symmetrical dimethylarginine (sDMA). Specifically mediates the symmetrical dimethylation of SF3B2. Involved in the regulation of alternative splicing of pre-mRNA. The sequence is that of Protein arginine N-methyltransferase 9 from Homo sapiens (Human).